The primary structure comprises 397 residues: P2X purinoceptor 3 (397 aa).

Residues 1-20 (MNCISDFFTYETTKSVVVKS) lie on the Cytoplasmic side of the membrane. A helical membrane pass occupies residues 21-43 (WTIGIINRVVQLLIISYFVGWVF). Topologically, residues 44–322 (LHEKAYQVRD…AGKFNIIPTI (279 aa)) are extracellular. Residues Lys-63 and Lys-65 each coordinate ATP. 3 disulfide bridges follow: Cys-107–Cys-153, Cys-116–Cys-137, and Cys-122–Cys-147. Glu-111 serves as a coordination point for Mg(2+). Asn-139 carries an N-linked (GlcNAc...) asparagine glycan. Residue Asp-158 coordinates Mg(2+). Asp-158 lines the Ca(2+) pocket. A glycan (N-linked (GlcNAc...) asparagine) is linked at Asn-170. Thr-172 is an ATP binding site. An N-linked (GlcNAc...) asparagine glycan is attached at Asn-194. 2 cysteine pairs are disulfide-bonded: Cys-203–Cys-213 and Cys-247–Cys-256. Ser-275, Asn-279, and Arg-281 together coordinate ATP. Residue Asn-290 is glycosylated (N-linked (GlcNAc...) asparagine). An ATP-binding site is contributed by Lys-299. Residues 323 to 341 (ISSVAAFTSVGVGTVLCDI) traverse the membrane as a helical segment. The Cytoplasmic segment spans residues 342-397 (ILLNFLKGADQYKAKKFEEVNETTLKIAALTNPVYPSDQTTAEKQSTDSGAFSIGH). Residues 378-391 (SDQTTAEKQSTDSG) are compositionally biased toward polar residues. The interval 378–397 (SDQTTAEKQSTDSGAFSIGH) is disordered.

The protein belongs to the P2X receptor family. Homotrimer. Forms heterotrimer with P2RX2. Heterotrimeric P2RX2/3 has a ligand dose-response profile that is distinct from either homotrimeric P2RX2 or P2RX3.

It is found in the cell membrane. The catalysed reaction is Ca(2+)(in) = Ca(2+)(out). It catalyses the reaction Na(+)(in) = Na(+)(out). Its activity is regulated as follows. Has high sensitivity to ATP. Fast activation by external ATP. Exhibits rapid desensitization. Sensitives to the ATP agonist:alpha/beta-methylene-ATP. Subject to allosteric inhibition by AF-219. Mg(2+) and Ca(2+) slow deactivation of P2RX3. Functionally, extracellular ATP-activated non-selective cation channel. Plays particularly important role in sensory neurons where its activation is critical for gustatory, nociceptive responses, visceral reflexes and sensory hypersensitization. The chain is P2X purinoceptor 3 (P2RX3) from Homo sapiens (Human).